Here is a 471-residue protein sequence, read N- to C-terminus: Adenosylhomocysteinase (471 aa).

The substrate site is built by threonine 60, aspartate 135, and glutamate 196. 197–199 (TTT) provides a ligand contact to NAD(+). Substrate-binding residues include lysine 226 and aspartate 230. NAD(+) contacts are provided by residues asparagine 231, 260–265 (GYGDVG), glutamate 283, asparagine 318, 339–341 (IGH), and asparagine 387.

The protein belongs to the adenosylhomocysteinase family. The cofactor is NAD(+).

Its subcellular location is the cytoplasm. The enzyme catalyses S-adenosyl-L-homocysteine + H2O = L-homocysteine + adenosine. It functions in the pathway amino-acid biosynthesis; L-homocysteine biosynthesis; L-homocysteine from S-adenosyl-L-homocysteine: step 1/1. May play a key role in the regulation of the intracellular concentration of adenosylhomocysteine. The protein is Adenosylhomocysteinase of Pelodictyon phaeoclathratiforme (strain DSM 5477 / BU-1).